We begin with the raw amino-acid sequence, 364 residues long: Glycerol dehydrogenase (364 aa).

The NAD(+) site is built by Asp37, Gly92, Lys93, Thr114, and Ser117. Asp119 lines the glycerol pocket. Positions 123, 125, and 129 each coordinate NAD(+). Glycerol is bound by residues Asp169, His252, and His269. Zn(2+) contacts are provided by Asp169, His252, and His269.

The protein belongs to the iron-containing alcohol dehydrogenase family. Requires Zn(2+) as cofactor.

It carries out the reaction glycerol + NAD(+) = dihydroxyacetone + NADH + H(+). It functions in the pathway polyol metabolism; glycerol fermentation; glycerone phosphate from glycerol (oxidative route): step 1/2. Catalyzes the NAD-dependent oxidation of glycerol to dihydroxyacetone (glycerone). This chain is Glycerol dehydrogenase (gldA), found in Thermotoga maritima (strain ATCC 43589 / DSM 3109 / JCM 10099 / NBRC 100826 / MSB8).